The following is a 344-amino-acid chain: uncharacterized protein (344 aa).

Transmembrane regions (helical) follow at residues Gly25–Val45, Phe68–Val88, Gly104–Cys124, Ser133–Ala153, Gly161–Val181, Leu224–Leu244, Val276–Leu296, and Leu302–Val322.

This sequence belongs to the peptidase S58 family.

It localises to the cell membrane. Aminopeptidase. This is an uncharacterized protein from Mycobacterium bovis (strain ATCC BAA-935 / AF2122/97).